The sequence spans 473 residues: Chromosomal replication initiator protein DnaA (473 aa).

The domain I, interacts with DnaA modulators stretch occupies residues Met-1 to Pro-76. The tract at residues Pro-76–Thr-135 is domain II. Positions Gln-136–Ser-353 are domain III, AAA+ region. Positions 181, 183, 184, and 185 each coordinate ATP. Residues Val-354–Asn-473 form a domain IV, binds dsDNA region.

Belongs to the DnaA family. Oligomerizes as a right-handed, spiral filament on DNA at oriC.

The protein localises to the cytoplasm. Functionally, plays an essential role in the initiation and regulation of chromosomal replication. ATP-DnaA binds to the origin of replication (oriC) to initiate formation of the DNA replication initiation complex once per cell cycle. Binds the DnaA box (a 9 base pair repeat at the origin) and separates the double-stranded (ds)DNA. Forms a right-handed helical filament on oriC DNA; dsDNA binds to the exterior of the filament while single-stranded (ss)DNA is stabiized in the filament's interior. The ATP-DnaA-oriC complex binds and stabilizes one strand of the AT-rich DNA unwinding element (DUE), permitting loading of DNA polymerase. After initiation quickly degrades to an ADP-DnaA complex that is not apt for DNA replication. Binds acidic phospholipids. This Porphyromonas gingivalis (strain ATCC 33277 / DSM 20709 / CIP 103683 / JCM 12257 / NCTC 11834 / 2561) protein is Chromosomal replication initiator protein DnaA.